We begin with the raw amino-acid sequence, 313 residues long: Ribosomal RNA small subunit methyltransferase H (313 aa).

S-adenosyl-L-methionine contacts are provided by residues Gly35–His37, Asp55, Phe79, Asp100, and Gln107.

This sequence belongs to the methyltransferase superfamily. RsmH family.

Its subcellular location is the cytoplasm. The enzyme catalyses cytidine(1402) in 16S rRNA + S-adenosyl-L-methionine = N(4)-methylcytidine(1402) in 16S rRNA + S-adenosyl-L-homocysteine + H(+). Its function is as follows. Specifically methylates the N4 position of cytidine in position 1402 (C1402) of 16S rRNA. This is Ribosomal RNA small subunit methyltransferase H from Burkholderia vietnamiensis (strain G4 / LMG 22486) (Burkholderia cepacia (strain R1808)).